Consider the following 111-residue polypeptide: MPPLSESEFLALASKALDQLEAAIEAAADAADADVEINRTGNVMELEFEDGSKIIVNSQAPMQELWVAAKAGGFHFRNDGSKWVDTRGGGELYAALSGYMSQQAGVTLTLK.

It belongs to the frataxin family.

Its function is as follows. Involved in iron-sulfur (Fe-S) cluster assembly. May act as a regulator of Fe-S biogenesis. The chain is Iron-sulfur cluster assembly protein CyaY from Cupriavidus metallidurans (strain ATCC 43123 / DSM 2839 / NBRC 102507 / CH34) (Ralstonia metallidurans).